Reading from the N-terminus, the 328-residue chain is DNA-directed RNA polymerase subunit alpha (328 aa).

An alpha N-terminal domain (alpha-NTD) region spans residues 1–234 (MQTAVNEFLT…QQLAVFVDLE (234 aa)). The segment at 248-328 (IDPILLRPVD…NWPPASLKND (81 aa)) is alpha C-terminal domain (alpha-CTD).

Belongs to the RNA polymerase alpha chain family. Homodimer. The RNAP catalytic core consists of 2 alpha, 1 beta, 1 beta' and 1 omega subunit. When a sigma factor is associated with the core the holoenzyme is formed, which can initiate transcription.

The catalysed reaction is RNA(n) + a ribonucleoside 5'-triphosphate = RNA(n+1) + diphosphate. In terms of biological role, DNA-dependent RNA polymerase catalyzes the transcription of DNA into RNA using the four ribonucleoside triphosphates as substrates. In Cellvibrio japonicus (strain Ueda107) (Pseudomonas fluorescens subsp. cellulosa), this protein is DNA-directed RNA polymerase subunit alpha.